The sequence spans 352 residues: tRNA-specific 2-thiouridylase MnmA (352 aa).

Residues 11-18 (AMSGGVDS) and Met-37 each bind ATP. The active-site Nucleophile is Cys-101. The cysteines at positions 101 and 197 are disulfide-linked. Gly-125 provides a ligand contact to ATP. Positions 147 to 149 (KDQ) are interaction with tRNA. The active-site Cysteine persulfide intermediate is Cys-197. Positions 302–303 (RY) are interaction with tRNA.

It belongs to the MnmA/TRMU family.

The protein resides in the cytoplasm. The catalysed reaction is S-sulfanyl-L-cysteinyl-[protein] + uridine(34) in tRNA + AH2 + ATP = 2-thiouridine(34) in tRNA + L-cysteinyl-[protein] + A + AMP + diphosphate + H(+). Catalyzes the 2-thiolation of uridine at the wobble position (U34) of tRNA, leading to the formation of s(2)U34. This chain is tRNA-specific 2-thiouridylase MnmA, found in Syntrophotalea carbinolica (strain DSM 2380 / NBRC 103641 / GraBd1) (Pelobacter carbinolicus).